The chain runs to 233 residues: Nickel import system ATP-binding protein NikE (233 aa).

Positions 2-228 (IELKHVTFGY…DRHPYTKELV (227 aa)) constitute an ABC transporter domain. An ATP-binding site is contributed by 35–42 (GESGCGKS).

It belongs to the ABC transporter superfamily. As to quaternary structure, the complex is composed of two ATP-binding proteins (NikD and NikE), two transmembrane proteins (NikB and NikC) and a solute-binding protein (NikA).

Its subcellular location is the cell membrane. It catalyses the reaction Ni(2+)(out) + ATP + H2O = Ni(2+)(in) + ADP + phosphate + H(+). Part of the ABC transporter complex NikABCDE (Opp2) involved in nickel import. Probably responsible for energy coupling to the transport system. This Staphylococcus aureus (strain MRSA252) protein is Nickel import system ATP-binding protein NikE.